The sequence spans 276 residues: NADPH-dependent 7-cyano-7-deazaguanine reductase (276 aa).

Position 80–82 (80–82 (IES)) interacts with substrate. 82 to 83 (SK) provides a ligand contact to NADPH. The Thioimide intermediate role is filled by Cys-178. Asp-185 (proton donor) is an active-site residue. Substrate is bound at residue 217-218 (HE). 246–247 (RG) serves as a coordination point for NADPH.

This sequence belongs to the GTP cyclohydrolase I family. QueF type 2 subfamily. Homodimer.

It is found in the cytoplasm. It catalyses the reaction 7-aminomethyl-7-carbaguanine + 2 NADP(+) = 7-cyano-7-deazaguanine + 2 NADPH + 3 H(+). It functions in the pathway tRNA modification; tRNA-queuosine biosynthesis. Functionally, catalyzes the NADPH-dependent reduction of 7-cyano-7-deazaguanine (preQ0) to 7-aminomethyl-7-deazaguanine (preQ1). This chain is NADPH-dependent 7-cyano-7-deazaguanine reductase, found in Teredinibacter turnerae (strain ATCC 39867 / T7901).